The sequence spans 235 residues: Ubiquinone biosynthesis O-methyltransferase (235 aa).

4 residues coordinate S-adenosyl-L-methionine: Arg39, Gly59, Asp80, and Met124.

It belongs to the methyltransferase superfamily. UbiG/COQ3 family.

It carries out the reaction a 3-demethylubiquinol + S-adenosyl-L-methionine = a ubiquinol + S-adenosyl-L-homocysteine + H(+). It catalyses the reaction a 3-(all-trans-polyprenyl)benzene-1,2-diol + S-adenosyl-L-methionine = a 2-methoxy-6-(all-trans-polyprenyl)phenol + S-adenosyl-L-homocysteine + H(+). The protein operates within cofactor biosynthesis; ubiquinone biosynthesis. O-methyltransferase that catalyzes the 2 O-methylation steps in the ubiquinone biosynthetic pathway. The sequence is that of Ubiquinone biosynthesis O-methyltransferase from Vibrio vulnificus (strain CMCP6).